Reading from the N-terminus, the 664-residue chain is DNA mismatch repair protein MutL (664 aa).

Residues 382-447 (RKAGQEQQLQ…YGEPAPSKQQ (66 aa)) form a disordered region. Residues 427–436 (RHTTSSNQSE) are compositionally biased toward polar residues.

Belongs to the DNA mismatch repair MutL/HexB family.

This protein is involved in the repair of mismatches in DNA. It is required for dam-dependent methyl-directed DNA mismatch repair. May act as a 'molecular matchmaker', a protein that promotes the formation of a stable complex between two or more DNA-binding proteins in an ATP-dependent manner without itself being part of a final effector complex. The chain is DNA mismatch repair protein MutL from Vibrio vulnificus (strain CMCP6).